A 157-amino-acid polypeptide reads, in one-letter code: Ribosome maturation factor RimP (157 aa).

This sequence belongs to the RimP family.

The protein resides in the cytoplasm. Functionally, required for maturation of 30S ribosomal subunits. In Thermosynechococcus vestitus (strain NIES-2133 / IAM M-273 / BP-1), this protein is Ribosome maturation factor RimP.